The sequence spans 229 residues: UPF0758 protein Fjoh_0413 (229 aa).

The 123-residue stretch at Lys-107–Phe-229 folds into the MPN domain. Zn(2+)-binding residues include His-178, His-180, and Asp-191. The short motif at His-178 to Asp-191 is the JAMM motif element.

The protein belongs to the UPF0758 family.

This is UPF0758 protein Fjoh_0413 from Flavobacterium johnsoniae (strain ATCC 17061 / DSM 2064 / JCM 8514 / BCRC 14874 / CCUG 350202 / NBRC 14942 / NCIMB 11054 / UW101) (Cytophaga johnsonae).